A 526-amino-acid chain; its full sequence is ATP synthase subunit alpha (526 aa).

An ATP-binding site is contributed by 171 to 178; sequence GDRQTGKT.

This sequence belongs to the ATPase alpha/beta chains family. In terms of assembly, F-type ATPases have 2 components, CF(1) - the catalytic core - and CF(0) - the membrane proton channel. CF(1) has five subunits: alpha(3), beta(3), gamma(1), delta(1), epsilon(1). CF(0) has four main subunits: a(1), b(1), b'(1) and c(9-12).

The protein resides in the cell inner membrane. The enzyme catalyses ATP + H2O + 4 H(+)(in) = ADP + phosphate + 5 H(+)(out). Functionally, produces ATP from ADP in the presence of a proton gradient across the membrane. The alpha chain is a regulatory subunit. This Chlorobium chlorochromatii (strain CaD3) protein is ATP synthase subunit alpha.